Consider the following 352-residue polypeptide: UDP-N-acetylglucosamine--N-acetylmuramyl-(pentapeptide) pyrophosphoryl-undecaprenol N-acetylglucosamine transferase 3 (352 aa).

Residues Ser11 to Gly13, Arg164, Ser194, and Gln289 each bind UDP-N-acetyl-alpha-D-glucosamine.

This sequence belongs to the glycosyltransferase 28 family. MurG subfamily.

The protein localises to the cell membrane. It catalyses the reaction di-trans,octa-cis-undecaprenyl diphospho-N-acetyl-alpha-D-muramoyl-L-alanyl-D-glutamyl-meso-2,6-diaminopimeloyl-D-alanyl-D-alanine + UDP-N-acetyl-alpha-D-glucosamine = di-trans,octa-cis-undecaprenyl diphospho-[N-acetyl-alpha-D-glucosaminyl-(1-&gt;4)]-N-acetyl-alpha-D-muramoyl-L-alanyl-D-glutamyl-meso-2,6-diaminopimeloyl-D-alanyl-D-alanine + UDP + H(+). It participates in cell wall biogenesis; peptidoglycan biosynthesis. Cell wall formation. Catalyzes the transfer of a GlcNAc subunit on undecaprenyl-pyrophosphoryl-MurNAc-pentapeptide (lipid intermediate I) to form undecaprenyl-pyrophosphoryl-MurNAc-(pentapeptide)GlcNAc (lipid intermediate II). The sequence is that of UDP-N-acetylglucosamine--N-acetylmuramyl-(pentapeptide) pyrophosphoryl-undecaprenol N-acetylglucosamine transferase 3 from Bacillus thuringiensis (strain Al Hakam).